The following is a 443-amino-acid chain: Chromosomal replication initiator protein DnaA (443 aa).

The tract at residues 1–76 (MMDAWPRCLE…GNGEVALAVG (76 aa)) is domain I, interacts with DnaA modulators. The segment at 76 to 105 (GSRPRAPEPAPAPVAATIAPQAAPIAPFAG) is domain II. A domain III, AAA+ region region spans residues 106 to 323 (NLDSHYTFAN…GALNTLVARA (218 aa)). Residues G151, G153, K154, and T155 each contribute to the ATP site. The interval 324 to 443 (NFTGRSITVE…WEKLIRKLSE (120 aa)) is domain IV, binds dsDNA.

The protein belongs to the DnaA family. As to quaternary structure, oligomerizes as a right-handed, spiral filament on DNA at oriC.

It is found in the cytoplasm. Plays an essential role in the initiation and regulation of chromosomal replication. ATP-DnaA binds to the origin of replication (oriC) to initiate formation of the DNA replication initiation complex once per cell cycle. Binds the DnaA box (a 9 base pair repeat at the origin) and separates the double-stranded (ds)DNA. Forms a right-handed helical filament on oriC DNA; dsDNA binds to the exterior of the filament while single-stranded (ss)DNA is stabiized in the filament's interior. The ATP-DnaA-oriC complex binds and stabilizes one strand of the AT-rich DNA unwinding element (DUE), permitting loading of DNA polymerase. After initiation quickly degrades to an ADP-DnaA complex that is not apt for DNA replication. Binds acidic phospholipids. The polypeptide is Chromosomal replication initiator protein DnaA (Xanthomonas oryzae pv. oryzae (strain KACC10331 / KXO85)).